Here is a 208-residue protein sequence, read N- to C-terminus: UPF0319 protein VSAL_I2129 (208 aa).

The signal sequence occupies residues 1–21 (MKFHSFLAAGLCLLTSLSASA).

This sequence belongs to the UPF0319 family.

This Aliivibrio salmonicida (strain LFI1238) (Vibrio salmonicida (strain LFI1238)) protein is UPF0319 protein VSAL_I2129.